The chain runs to 361 residues: Peptide chain release factor 1 (361 aa).

Position 235 is an N5-methylglutamine (Gln235). The interval 287 to 309 is disordered; that stretch reads QKEASAMRSAQVGSGDRSERIRT.

This sequence belongs to the prokaryotic/mitochondrial release factor family. Methylated by PrmC. Methylation increases the termination efficiency of RF1.

The protein resides in the cytoplasm. Peptide chain release factor 1 directs the termination of translation in response to the peptide chain termination codons UAG and UAA. This Chlamydia caviae (strain ATCC VR-813 / DSM 19441 / 03DC25 / GPIC) (Chlamydophila caviae) protein is Peptide chain release factor 1.